The primary structure comprises 91 residues: Acylphosphatase (91 aa).

In terms of domain architecture, Acylphosphatase-like spans 5-91; it reads RAHVFVSGRV…EGVDGFEVRW (87 aa). Active-site residues include Arg20 and Asn38.

The protein belongs to the acylphosphatase family.

The catalysed reaction is an acyl phosphate + H2O = a carboxylate + phosphate + H(+). The sequence is that of Acylphosphatase (acyP) from Haloarcula marismortui (strain ATCC 43049 / DSM 3752 / JCM 8966 / VKM B-1809) (Halobacterium marismortui).